An 82-amino-acid chain; its full sequence is UPF0213 protein MW0443 (82 aa).

In terms of domain architecture, GIY-YIG spans 2–77; it reads DSHFVYIVKC…KTYTRQKKLR (76 aa).

This sequence belongs to the UPF0213 family.

This chain is UPF0213 protein MW0443, found in Staphylococcus aureus (strain MW2).